We begin with the raw amino-acid sequence, 168 residues long: Dihydrofolate reductase (168 aa).

Residues 1–164 (MIIGIWAEDE…YTFTIKKYEK (164 aa)) enclose the DHFR domain. Substrate is bound at residue 5 to 7 (IWA). NADP(+) contacts are provided by residues 6-7 (WA) and 14-19 (IGEADK). E27 provides a ligand contact to substrate. 43 to 46 (GRKT) is an NADP(+) binding site. Residue R58 participates in substrate binding. NADP(+) is bound by residues 63-66 (LTRD) and 99-104 (TGGAEI). Residue T118 coordinates substrate.

Belongs to the dihydrofolate reductase family.

The enzyme catalyses (6S)-5,6,7,8-tetrahydrofolate + NADP(+) = 7,8-dihydrofolate + NADPH + H(+). Its pathway is cofactor biosynthesis; tetrahydrofolate biosynthesis; 5,6,7,8-tetrahydrofolate from 7,8-dihydrofolate: step 1/1. In terms of biological role, key enzyme in folate metabolism. Catalyzes an essential reaction for de novo glycine and purine synthesis, and for DNA precursor synthesis. The protein is Dihydrofolate reductase (folA) of Lactococcus lactis subsp. lactis (strain IL1403) (Streptococcus lactis).